The following is a 415-amino-acid chain: Elongation factor Tu, chloroplastic (415 aa).

Positions 13-217 (KIHLNVGTIG…HLDLYLPTPR (205 aa)) constitute a tr-type G domain. A G1 region spans residues 22-29 (GHFSHGKT). Position 22 to 29 (22 to 29 (GHFSHGKT)) interacts with GTP. Residue T29 participates in Mg(2+) binding. The interval 63-67 (NMSIY) is G2. The G3 stretch occupies residues 84 to 87 (DCPG). Residues 84 to 88 (DCPGH) and 139 to 142 (NKED) contribute to the GTP site. The segment at 139–142 (NKED) is G4. A G5 region spans residues 177–179 (SAL).

This sequence belongs to the TRAFAC class translation factor GTPase superfamily. Classic translation factor GTPase family. EF-Tu/EF-1A subfamily.

It localises to the plastid. Its subcellular location is the chloroplast. It catalyses the reaction GTP + H2O = GDP + phosphate + H(+). Its function is as follows. GTP hydrolase that promotes the GTP-dependent binding of aminoacyl-tRNA to the A-site of ribosomes during protein biosynthesis. This chain is Elongation factor Tu, chloroplastic (tufA), found in Coleochaete orbicularis (Charophycean green alga).